The chain runs to 246 residues: Probable phosphatase AHA_1344 (246 aa).

Zn(2+) contacts are provided by H8, H10, H16, H41, E74, H102, H132, D193, and H195.

It belongs to the PHP family. Requires Zn(2+) as cofactor.

The sequence is that of Probable phosphatase AHA_1344 from Aeromonas hydrophila subsp. hydrophila (strain ATCC 7966 / DSM 30187 / BCRC 13018 / CCUG 14551 / JCM 1027 / KCTC 2358 / NCIMB 9240 / NCTC 8049).